We begin with the raw amino-acid sequence, 207 residues long: Small ribosomal subunit protein uS4 (207 aa).

A disordered region spans residues 31 to 55 (KCKLDSKPGQHGRTSGARTSDYGTQ). Over residues 42-53 (GRTSGARTSDYG) the composition is skewed to polar residues. Positions 97 to 157 (SRLDNVVYRM…EQKKKQARIL (61 aa)) constitute an S4 RNA-binding domain.

The protein belongs to the universal ribosomal protein uS4 family. Part of the 30S ribosomal subunit. Contacts protein S5. The interaction surface between S4 and S5 is involved in control of translational fidelity.

One of the primary rRNA binding proteins, it binds directly to 16S rRNA where it nucleates assembly of the body of the 30S subunit. Its function is as follows. With S5 and S12 plays an important role in translational accuracy. This Paraburkholderia xenovorans (strain LB400) protein is Small ribosomal subunit protein uS4.